Consider the following 434-residue polypeptide: Adenylosuccinate synthetase (434 aa).

GTP contacts are provided by residues 22-28 (GDEGKGK) and 50-52 (GHT). Aspartate 23 functions as the Proton acceptor in the catalytic mechanism. Mg(2+) contacts are provided by aspartate 23 and glycine 50. IMP is bound by residues 23–26 (DEGK), 48–51 (NAGH), threonine 139, arginine 153, glutamine 234, threonine 249, and arginine 313. Histidine 51 functions as the Proton donor in the catalytic mechanism. 309-315 (ATTGRKR) serves as a coordination point for substrate. Residues arginine 315, 341–343 (KLD), and 423–425 (SVG) each bind GTP.

The protein belongs to the adenylosuccinate synthetase family. As to quaternary structure, homodimer. The cofactor is Mg(2+).

The protein localises to the cytoplasm. The enzyme catalyses IMP + L-aspartate + GTP = N(6)-(1,2-dicarboxyethyl)-AMP + GDP + phosphate + 2 H(+). It functions in the pathway purine metabolism; AMP biosynthesis via de novo pathway; AMP from IMP: step 1/2. In terms of biological role, plays an important role in the de novo pathway of purine nucleotide biosynthesis. Catalyzes the first committed step in the biosynthesis of AMP from IMP. This Chlorobium luteolum (strain DSM 273 / BCRC 81028 / 2530) (Pelodictyon luteolum) protein is Adenylosuccinate synthetase.